Here is a 210-residue protein sequence, read N- to C-terminus: Imidazole glycerol phosphate synthase subunit HisH (210 aa).

Residues 3-210 (TIAIIDYGMG…ILKNFALSKA (208 aa)) form the Glutamine amidotransferase type-1 domain. C81 functions as the Nucleophile in the catalytic mechanism. Residues H190 and E192 contribute to the active site.

Heterodimer of HisH and HisF.

Its subcellular location is the cytoplasm. The enzyme catalyses 5-[(5-phospho-1-deoxy-D-ribulos-1-ylimino)methylamino]-1-(5-phospho-beta-D-ribosyl)imidazole-4-carboxamide + L-glutamine = D-erythro-1-(imidazol-4-yl)glycerol 3-phosphate + 5-amino-1-(5-phospho-beta-D-ribosyl)imidazole-4-carboxamide + L-glutamate + H(+). It carries out the reaction L-glutamine + H2O = L-glutamate + NH4(+). It participates in amino-acid biosynthesis; L-histidine biosynthesis; L-histidine from 5-phospho-alpha-D-ribose 1-diphosphate: step 5/9. IGPS catalyzes the conversion of PRFAR and glutamine to IGP, AICAR and glutamate. The HisH subunit catalyzes the hydrolysis of glutamine to glutamate and ammonia as part of the synthesis of IGP and AICAR. The resulting ammonia molecule is channeled to the active site of HisF. The chain is Imidazole glycerol phosphate synthase subunit HisH from Geobacter metallireducens (strain ATCC 53774 / DSM 7210 / GS-15).